Here is a 235-residue protein sequence, read N- to C-terminus: Uridylate kinase (235 aa).

10-13 provides a ligand contact to ATP; the sequence is KLSG. Residue glycine 52 coordinates UMP. The ATP site is built by glycine 53 and arginine 57. Residues aspartate 72 and 133–140 contribute to the UMP site; that span reads TSNPYFST. ATP is bound by residues threonine 160, tyrosine 166, and aspartate 169.

This sequence belongs to the UMP kinase family. As to quaternary structure, homohexamer.

It is found in the cytoplasm. The catalysed reaction is UMP + ATP = UDP + ADP. Its pathway is pyrimidine metabolism; CTP biosynthesis via de novo pathway; UDP from UMP (UMPK route): step 1/1. Inhibited by UTP. Functionally, catalyzes the reversible phosphorylation of UMP to UDP. The polypeptide is Uridylate kinase (Solibacter usitatus (strain Ellin6076)).